A 94-amino-acid polypeptide reads, in one-letter code: ATP synthase F(0) complex subunit f, mitochondrial (94 aa).

Ala2 carries the N-acetylalanine modification. Ser3 is subject to Phosphoserine. Lys22 bears the N6-acetyllysine mark. Residues 68–85 (MVLACYVLFSYSFSYKHL) form a helical membrane-spanning segment.

This sequence belongs to the ATPase F chain family. As to quaternary structure, component of the ATP synthase complex composed at least of ATP5F1A/subunit alpha, ATP5F1B/subunit beta, ATP5MC1/subunit c (homooctomer), MT-ATP6/subunit a, MT-ATP8/subunit 8, ATP5ME/subunit e, ATP5MF/subunit f, ATP5MG/subunit g, ATP5MK/subunit k, ATP5MJ/subunit j, ATP5F1C/subunit gamma, ATP5F1D/subunit delta, ATP5F1E/subunit epsilon, ATP5PF/subunit F6, ATP5PB/subunit b, ATP5PD/subunit d, ATP5PO/subunit OSCP. ATP synthase complex consists of a soluble F(1) head domain (subunits alpha(3) and beta(3)) - the catalytic core - and a membrane F(0) domain - the membrane proton channel (subunits c, a, 8, e, f, g, k and j). These two domains are linked by a central stalk (subunits gamma, delta, and epsilon) rotating inside the F1 region and a stationary peripheral stalk (subunits F6, b, d, and OSCP).

It localises to the mitochondrion. The protein localises to the mitochondrion inner membrane. Subunit f, of the mitochondrial membrane ATP synthase complex (F(1)F(0) ATP synthase or Complex V) that produces ATP from ADP in the presence of a proton gradient across the membrane which is generated by electron transport complexes of the respiratory chain. ATP synthase complex consist of a soluble F(1) head domain - the catalytic core - and a membrane F(1) domain - the membrane proton channel. These two domains are linked by a central stalk rotating inside the F(1) region and a stationary peripheral stalk. During catalysis, ATP synthesis in the catalytic domain of F(1) is coupled via a rotary mechanism of the central stalk subunits to proton translocation. In vivo, can only synthesize ATP although its ATP hydrolase activity can be activated artificially in vitro. Part of the complex F(0) domain. In Homo sapiens (Human), this protein is ATP synthase F(0) complex subunit f, mitochondrial.